Reading from the N-terminus, the 317-residue chain is Ribonuclease Z (317 aa).

The Zn(2+) site is built by His-61, His-63, Asp-65, His-66, His-153, Asp-221, and His-280. Asp-65 functions as the Proton acceptor in the catalytic mechanism.

The protein belongs to the RNase Z family. Homodimer. Zn(2+) serves as cofactor.

It catalyses the reaction Endonucleolytic cleavage of RNA, removing extra 3' nucleotides from tRNA precursor, generating 3' termini of tRNAs. A 3'-hydroxy group is left at the tRNA terminus and a 5'-phosphoryl group is left at the trailer molecule.. Zinc phosphodiesterase, which displays some tRNA 3'-processing endonuclease activity. Probably involved in tRNA maturation, by removing a 3'-trailer from precursor tRNA. This Alkaliphilus oremlandii (strain OhILAs) (Clostridium oremlandii (strain OhILAs)) protein is Ribonuclease Z.